A 389-amino-acid polypeptide reads, in one-letter code: Chalcone synthase 1A (389 aa).

The active site involves cysteine 164.

It belongs to the thiolase-like superfamily. Chalcone/stilbene synthases family.

The enzyme catalyses (E)-4-coumaroyl-CoA + 3 malonyl-CoA + 3 H(+) = 2',4,4',6'-tetrahydroxychalcone + 3 CO2 + 4 CoA. Its pathway is secondary metabolite biosynthesis; flavonoid biosynthesis. The primary product of this enzyme is 4,2',4',6'-tetrahydroxychalcone (also termed naringenin-chalcone or chalcone) which can under specific conditions spontaneously isomerize into naringenin. The sequence is that of Chalcone synthase 1A (CHS1A) from Solanum tuberosum (Potato).